A 274-amino-acid polypeptide reads, in one-letter code: NADPH-dependent 7-cyano-7-deazaguanine reductase (274 aa).

80–82 contributes to the substrate binding site; the sequence is VES. 82 to 83 lines the NADPH pocket; it reads SK. The Thioimide intermediate role is filled by Cys-181. Asp-188 (proton donor) is an active-site residue. Substrate is bound at residue 220–221; that stretch reads HE. Position 249–250 (249–250) interacts with NADPH; it reads RG.

The protein belongs to the GTP cyclohydrolase I family. QueF type 2 subfamily. As to quaternary structure, homodimer.

It is found in the cytoplasm. It catalyses the reaction 7-aminomethyl-7-carbaguanine + 2 NADP(+) = 7-cyano-7-deazaguanine + 2 NADPH + 3 H(+). Its pathway is tRNA modification; tRNA-queuosine biosynthesis. Catalyzes the NADPH-dependent reduction of 7-cyano-7-deazaguanine (preQ0) to 7-aminomethyl-7-deazaguanine (preQ1). This Paraburkholderia xenovorans (strain LB400) protein is NADPH-dependent 7-cyano-7-deazaguanine reductase.